Here is a 172-residue protein sequence, read N- to C-terminus: Large ribosomal subunit protein uL10 (172 aa).

This sequence belongs to the universal ribosomal protein uL10 family. In terms of assembly, part of the ribosomal stalk of the 50S ribosomal subunit. The N-terminus interacts with L11 and the large rRNA to form the base of the stalk. The C-terminus forms an elongated spine to which L12 dimers bind in a sequential fashion forming a multimeric L10(L12)X complex.

Functionally, forms part of the ribosomal stalk, playing a central role in the interaction of the ribosome with GTP-bound translation factors. The chain is Large ribosomal subunit protein uL10 (rplJ) from Caulobacter vibrioides (strain ATCC 19089 / CIP 103742 / CB 15) (Caulobacter crescentus).